Reading from the N-terminus, the 129-residue chain is Small ribosomal subunit protein uS11 (129 aa).

It belongs to the universal ribosomal protein uS11 family. In terms of assembly, part of the 30S ribosomal subunit. Interacts with proteins S7 and S18. Binds to IF-3.

In terms of biological role, located on the platform of the 30S subunit, it bridges several disparate RNA helices of the 16S rRNA. Forms part of the Shine-Dalgarno cleft in the 70S ribosome. The protein is Small ribosomal subunit protein uS11 of Methylobacillus flagellatus (strain ATCC 51484 / DSM 6875 / VKM B-1610 / KT).